The following is a 416-amino-acid chain: UDP-N-acetylmuramoylalanine--D-glutamate ligase (416 aa).

104 to 110 (GSNGKST) contributes to the ATP binding site.

This sequence belongs to the MurCDEF family.

It localises to the cytoplasm. It carries out the reaction UDP-N-acetyl-alpha-D-muramoyl-L-alanine + D-glutamate + ATP = UDP-N-acetyl-alpha-D-muramoyl-L-alanyl-D-glutamate + ADP + phosphate + H(+). It functions in the pathway cell wall biogenesis; peptidoglycan biosynthesis. Cell wall formation. Catalyzes the addition of glutamate to the nucleotide precursor UDP-N-acetylmuramoyl-L-alanine (UMA). The polypeptide is UDP-N-acetylmuramoylalanine--D-glutamate ligase (Francisella tularensis subsp. tularensis (strain FSC 198)).